The following is a 381-amino-acid chain: Pyrimidine monooxygenase RutA (381 aa).

FMN-binding positions include 66 to 67 (IK), Asn132, Glu141, 157 to 158 (RY), and Ser207.

It belongs to the NtaA/SnaA/DszA monooxygenase family. RutA subfamily.

It catalyses the reaction uracil + FMNH2 + NADH + O2 = (Z)-3-ureidoacrylate + FMN + NAD(+) + H2O + H(+). The enzyme catalyses thymine + FMNH2 + NADH + O2 = (Z)-2-methylureidoacrylate + FMN + NAD(+) + H2O + H(+). In terms of biological role, catalyzes the pyrimidine ring opening between N-3 and C-4 by an unusual flavin hydroperoxide-catalyzed mechanism, adding oxygen atoms in the process to yield ureidoacrylate peracid, that immediately reacts with FMN forming ureidoacrylate and FMN-N(5)-oxide. The FMN-N(5)-oxide reacts spontaneously with NADH to produce FMN. Requires the flavin reductase RutF to regenerate FMN in vivo. The polypeptide is Pyrimidine monooxygenase RutA (Methylobacterium radiotolerans (strain ATCC 27329 / DSM 1819 / JCM 2831 / NBRC 15690 / NCIMB 10815 / 0-1)).